An 821-amino-acid polypeptide reads, in one-letter code: Pentatricopeptide repeat-containing protein At4g04790, mitochondrial (821 aa).

The transit peptide at 1-74 (MVVSKVNKSL…KLLHVTTSDK (74 aa)) directs the protein to the mitochondrion. 7 PPR repeats span residues 372-406 (SSTS…GLMI), 407-441 (SADI…SVKP), 442-476 (NTEN…NLEP), 477-511 (NSSM…GVKP), 512-542 (DSIT…AGVQ), 544-574 (TKRI…PDVP), and 578-612 (QNEL…ECHV). Positions 801-821 (AFSQAPNKKKPKKKMIVLSTK) are disordered.

This sequence belongs to the PPR family. P subfamily.

It is found in the mitochondrion. The polypeptide is Pentatricopeptide repeat-containing protein At4g04790, mitochondrial (Arabidopsis thaliana (Mouse-ear cress)).